The following is a 123-amino-acid chain: Venom protein 29 (123 aa).

A signal peptide spans 1 to 18 (MNKLFLFTLLVTLWSVKG).

In terms of processing, contains 3 disulfide bonds. In terms of tissue distribution, expressed by the venom gland.

It localises to the secreted. The protein is Venom protein 29 of Lychas mucronatus (Chinese swimming scorpion).